The primary structure comprises 675 residues: DNA gyrase subunit B (675 aa).

Positions 453–567 (SELYVVEGDS…NGHVFLAQPP (115 aa)) constitute a Toprim domain. The Mg(2+) site is built by E459, D532, and D534.

Belongs to the type II topoisomerase GyrB family. In terms of assembly, heterotetramer, composed of two GyrA and two GyrB chains. In the heterotetramer, GyrA contains the active site tyrosine that forms a transient covalent intermediate with DNA, while GyrB binds cofactors and catalyzes ATP hydrolysis. The cofactor is Mg(2+). Mn(2+) is required as a cofactor. Ca(2+) serves as cofactor.

Its subcellular location is the cytoplasm. The catalysed reaction is ATP-dependent breakage, passage and rejoining of double-stranded DNA.. Its function is as follows. A type II topoisomerase that negatively supercoils closed circular double-stranded (ds) DNA in an ATP-dependent manner to modulate DNA topology and maintain chromosomes in an underwound state. Negative supercoiling favors strand separation, and DNA replication, transcription, recombination and repair, all of which involve strand separation. Also able to catalyze the interconversion of other topological isomers of dsDNA rings, including catenanes and knotted rings. Type II topoisomerases break and join 2 DNA strands simultaneously in an ATP-dependent manner. This Mycobacterium tuberculosis (strain ATCC 25177 / H37Ra) protein is DNA gyrase subunit B.